The chain runs to 60 residues: Metallothionein B (60 aa).

Residues methionine 1–cysteine 28 are beta. Cysteine 4, cysteine 6, cysteine 12, cysteine 14, cysteine 18, cysteine 20, cysteine 23, cysteine 25, cysteine 28, cysteine 32, cysteine 33, cysteine 35, cysteine 36, cysteine 40, cysteine 43, cysteine 47, cysteine 49, cysteine 54, cysteine 58, and cysteine 59 together coordinate a divalent metal cation. Residues lysine 29–glutamine 60 form an alpha region.

The protein belongs to the metallothionein superfamily. Type 1 family.

Its function is as follows. Metallothioneins have a high content of cysteine residues that bind various heavy metals. This is Metallothionein B (mtb) from Trematomus bernacchii (Emerald rockcod).